The chain runs to 603 residues: NADH-ubiquinone oxidoreductase chain 5 (603 aa).

The next 16 helical transmembrane spans lie at 4–24, 38–58, 87–107, 122–142, 144–160, 171–191, 211–233, 241–261, 272–292, 301–320, 325–347, 370–390, 407–429, 457–477, 482–502, and 583–603; these read YTTM…TTLI, SIIA…MCLD, MTFI…SLWY, LIFL…QLFI, WEGV…WWYA, AILY…WFLL, TPLL…HPWL, TPVS…FLLI, LIQT…AICA, IVAF…IGIN, AFLH…GSII, STSL…TGFY, WALS…MILL, LTIG…PMST, IPLY…LTAL, and MIKL…LLIM.

The protein belongs to the complex I subunit 5 family. In terms of assembly, core subunit of respiratory chain NADH dehydrogenase (Complex I) which is composed of 45 different subunits.

Its subcellular location is the mitochondrion inner membrane. It catalyses the reaction a ubiquinone + NADH + 5 H(+)(in) = a ubiquinol + NAD(+) + 4 H(+)(out). Core subunit of the mitochondrial membrane respiratory chain NADH dehydrogenase (Complex I) which catalyzes electron transfer from NADH through the respiratory chain, using ubiquinone as an electron acceptor. Essential for the catalytic activity and assembly of complex I. This Pan paniscus (Pygmy chimpanzee) protein is NADH-ubiquinone oxidoreductase chain 5 (MT-ND5).